Reading from the N-terminus, the 201-residue chain is MAGEASPVAQNPELVLASASPRRLELLSRLGVSPARVLATDLDESPLKGERPRDHAVRLAAEKARAAAALAPGCLVLAGDTVVGTGARILPKAEDEATARQCLALLSGRRHRVFSAVAVITPDGTLREALSETILRFKRLSDEEIEAYIAGGEWHGKAGGYAIQGSAEGFCAWLSGSHSGVVGLPLYETRRLLRAAGLDVR.

D80 (proton acceptor) is an active-site residue.

The protein belongs to the Maf family. YhdE subfamily. A divalent metal cation is required as a cofactor.

It is found in the cytoplasm. The catalysed reaction is dTTP + H2O = dTMP + diphosphate + H(+). It catalyses the reaction UTP + H2O = UMP + diphosphate + H(+). Nucleoside triphosphate pyrophosphatase that hydrolyzes dTTP and UTP. May have a dual role in cell division arrest and in preventing the incorporation of modified nucleotides into cellular nucleic acids. In Novosphingobium aromaticivorans (strain ATCC 700278 / DSM 12444 / CCUG 56034 / CIP 105152 / NBRC 16084 / F199), this protein is dTTP/UTP pyrophosphatase.